The sequence spans 269 residues: Enoyl-[acyl-carrier-protein] reductase [NADH] (269 aa).

NAD(+) is bound by residues 20–21 (SI), 64–65 (DV), and 95–96 (IG). Tyr-158 contacts substrate. The NAD(+) site is built by Lys-165 and Ile-194. Residue Thr-266 is modified to Phosphothreonine.

Belongs to the short-chain dehydrogenases/reductases (SDR) family. FabI subfamily. As to quaternary structure, homodimer. Homotetramer. Is phosphorylated in vivo. Phosphorylation on Thr-266 decreases enzymatic activity.

It localises to the secreted. The protein localises to the cell wall. The enzyme catalyses a 2,3-saturated acyl-[ACP] + NAD(+) = a (2E)-enoyl-[ACP] + NADH + H(+). It carries out the reaction a 2,3-saturated acyl-CoA + NAD(+) = a (2E)-enoyl-CoA + NADH + H(+). It catalyses the reaction (2E)-octenoyl-CoA + NADH + H(+) = octanoyl-CoA + NAD(+). The catalysed reaction is (2E)-dodecenoyl-CoA + NADH + H(+) = dodecanoyl-CoA + NAD(+). The protein operates within lipid metabolism; mycolic acid biosynthesis. With respect to regulation, inhA activity is controlled via phosphorylation: phosphorylation on Thr-266 decreases InhA activity and likely negatively regulates biosynthesis of mycolic acids and growth of the bacterium. InhA activity is likely inhibited by activated isoniazid, hexadecynoyl-CoA and octadecynoyl-CoA, which also block the biosynthesis of mycolic acids. The antitubercular pro-drug isoniazid (INH) is oxidatively activated by the catalase-peroxidase KatG and then covalently binds NAD to form an adduct that inhibits the activity of InhA. The inhibitory adduct is the isonicotinic-acyl-NADH where the isonicotinic-acyl group replaces the 4S (and not the 4R) hydrogen of NADH. Similarly, the antitubercular pro-drugs ethionamide (ETH) and prothionamide (PTH) are activated by the flavoprotein monooxygenase EthA, and forms an adduct with NAD (ETH-NAD and PTH-NAD, respectively) that is a tight-binding inhibitor of InhA. Enoyl-ACP reductase of the type II fatty acid syntase (FAS-II) system, which is involved in the biosynthesis of mycolic acids, a major component of mycobacterial cell walls. Catalyzes the NADH-dependent reduction of the double bond of 2-trans-enoyl-[acyl-carrier protein], an essential step in the fatty acid elongation cycle of the FAS-II pathway. Shows preference for long-chain fatty acyl thioester substrates (&gt;C16), and can also use 2-trans-enoyl-CoAs as alternative substrates. The mycobacterial FAS-II system utilizes the products of the FAS-I system as primers to extend fatty acyl chain lengths up to C56, forming the meromycolate chain that serves as the precursor for final mycolic acids. Its function is as follows. Is the primary target of the first-line antitubercular drug isoniazid (INH) and of the second-line drug ethionamide (ETH). Overexpressed inhA confers INH and ETH resistance to M.smegmatis. The mechanism of isoniazid action against InhA is covalent attachment of the activated form of the drug to the nicotinamide ring of NAD and binding of the INH-NAD adduct to the active site of InhA. Similarly, the ETH-NAD adduct binds InhA. The sequence is that of Enoyl-[acyl-carrier-protein] reductase [NADH] from Mycolicibacterium smegmatis (strain ATCC 700084 / mc(2)155) (Mycobacterium smegmatis).